The primary structure comprises 302 residues: Quinolinate synthase (302 aa).

The iminosuccinate site is built by His-24 and Ser-41. Cys-86 provides a ligand contact to [4Fe-4S] cluster. Residues 112–114 (YVN) and Ser-129 contribute to the iminosuccinate site. Residue Cys-171 participates in [4Fe-4S] cluster binding. Residues 197–199 (HPE) and Thr-214 each bind iminosuccinate. Cys-259 contacts [4Fe-4S] cluster.

This sequence belongs to the quinolinate synthase family. Type 2 subfamily. [4Fe-4S] cluster serves as cofactor.

The protein localises to the cytoplasm. The catalysed reaction is iminosuccinate + dihydroxyacetone phosphate = quinolinate + phosphate + 2 H2O + H(+). Its pathway is cofactor biosynthesis; NAD(+) biosynthesis; quinolinate from iminoaspartate: step 1/1. Functionally, catalyzes the condensation of iminoaspartate with dihydroxyacetone phosphate to form quinolinate. The chain is Quinolinate synthase from Dehalococcoides mccartyi (strain ATCC BAA-2100 / JCM 16839 / KCTC 5957 / BAV1).